The sequence spans 201 residues: Cell division protein SepF (201 aa).

The span at 27–38 (VQERTSVQRDSR) shows a compositional bias: basic and acidic residues. Residues 27–99 (VQERTSVQRD…PRVQNKDSVR (73 aa)) form a disordered region. Residues 43-54 (QEASQRSHMTNS) show a composition bias toward polar residues. The segment covering 72-81 (NRQERQRVQR) has biased composition (basic and acidic residues). The segment covering 83 to 92 (NAYQQATPRV) has biased composition (polar residues).

The protein belongs to the SepF family. Homodimer. Interacts with FtsZ.

It is found in the cytoplasm. Its function is as follows. Cell division protein that is part of the divisome complex and is recruited early to the Z-ring. Probably stimulates Z-ring formation, perhaps through the cross-linking of FtsZ protofilaments. Its function overlaps with FtsA. The sequence is that of Cell division protein SepF from Streptococcus agalactiae serotype V (strain ATCC BAA-611 / 2603 V/R).